The chain runs to 270 residues: Shikimate dehydrogenase (NADP(+)) (270 aa).

Shikimate-binding positions include 14–16 and threonine 60; that span reads SKS. The active-site Proton acceptor is lysine 64. Glutamate 76 is a binding site for NADP(+). Shikimate contacts are provided by asparagine 85 and aspartate 101. NADP(+) contacts are provided by residues 125-129, 149-154, and methionine 213; these read GAGGA and NRTASR. Tyrosine 215 provides a ligand contact to shikimate. Glycine 236 provides a ligand contact to NADP(+).

It belongs to the shikimate dehydrogenase family. As to quaternary structure, homodimer.

The catalysed reaction is shikimate + NADP(+) = 3-dehydroshikimate + NADPH + H(+). It functions in the pathway metabolic intermediate biosynthesis; chorismate biosynthesis; chorismate from D-erythrose 4-phosphate and phosphoenolpyruvate: step 4/7. Involved in the biosynthesis of the chorismate, which leads to the biosynthesis of aromatic amino acids. Catalyzes the reversible NADPH linked reduction of 3-dehydroshikimate (DHSA) to yield shikimate (SA). The chain is Shikimate dehydrogenase (NADP(+)) from Stutzerimonas stutzeri (strain A1501) (Pseudomonas stutzeri).